Consider the following 438-residue polypeptide: Elongation factor 1-alpha (438 aa).

One can recognise a tr-type G domain in the interval 6–229 (KPHLNIVIIG…ALDTLEVPPK (224 aa)). A G1 region spans residues 15–22 (GHVDHGKS). 15-22 (GHVDHGKS) is a GTP binding site. Ser22 contacts Mg(2+). The interval 71–75 (GVTIS) is G2. Positions 92-95 (DAPG) are G3. GTP contacts are provided by residues 92 to 96 (DAPGH) and 154 to 157 (NKMD). Residues 154-157 (NKMD) form a G4 region. The interval 195–197 (SAW) is G5.

It belongs to the TRAFAC class translation factor GTPase superfamily. Classic translation factor GTPase family. EF-Tu/EF-1A subfamily.

It is found in the cytoplasm. It catalyses the reaction GTP + H2O = GDP + phosphate + H(+). GTP hydrolase that promotes the GTP-dependent binding of aminoacyl-tRNA to the A-site of ribosomes during protein biosynthesis. This chain is Elongation factor 1-alpha, found in Desulfurococcus mucosus (Desulfurococcus mobilis).